Reading from the N-terminus, the 415-residue chain is Calcium/calmodulin-dependent serine/threonine-protein kinase (415 aa).

Positions 12–308 constitute a Protein kinase domain; it reads YEISEILGRG…AQELLDHPWV (297 aa). Residues 18–26 and K46 contribute to the ATP site; that span reads LGRGGFSVV. Residue D173 is the Proton acceptor of the active site. Residues 318 to 328 form a calmodulin-binding region; it reads MDAEIVSRLQS.

It belongs to the protein kinase superfamily. CAMK Ser/Thr protein kinase family. CaMK subfamily.

The enzyme catalyses L-seryl-[protein] + ATP = O-phospho-L-seryl-[protein] + ADP + H(+). It catalyses the reaction L-threonyl-[protein] + ATP = O-phospho-L-threonyl-[protein] + ADP + H(+). Its function is as follows. May be involved in signal transduction processes. This Malus domestica (Apple) protein is Calcium/calmodulin-dependent serine/threonine-protein kinase.